Reading from the N-terminus, the 351-residue chain is MSVDLFPNDRFGAEDKYDNFKDAVKECSWLIEEIVKPQLPNIIDNFSKCLEMLESDQIFKMPVSNGIPNESNKQNDSPTVKGVITRQGQYIVDFHIVVRFPQFQRGKQVMFRMNTGLNFLLIQFSKIMTHLKNILEILNQLQVATDVSEFVSKFGVAMELLNHSLILLQNPPRDLVFPEDNNFAMKEMFQDCYSVCESTAHILGLELTLCRNELCIELRNLIKVTKKPWCEIDSKTGRSFCDQIRNQVTNERNKTLSKILSENGVQVQDSTLLNHIISSFQSEAITLPEAQELLRRGVTFDNRVVMECEKLIVSTSDPTLISISAKLNSLKASMANHQANLVASKQLSTYK.

As to quaternary structure, component of the RAVE complex composed of RAV1, RAV2 and CBF3D/SKP1. Within the complex, it interacts directly with RAV1 and CBF3D. Interacts with the V-ATPase V1 subunits VMA1, VMA2 and VMA8.

Its subcellular location is the cytoplasm. The protein resides in the early endosome membrane. In terms of biological role, component of the RAVE complex, which is required for stable assembly of the vacuolar ATPase complex V-ATPase under many conditions. May be required for transport between the early endosome and the late endosome/prevacuolar compartment (PVC). The protein is Regulator of V-ATPase in vacuolar membrane protein 2 (RAV2) of Saccharomyces cerevisiae (strain ATCC 204508 / S288c) (Baker's yeast).